The primary structure comprises 344 residues: Fructose-1,6-bisphosphatase class 1 (344 aa).

The Mg(2+) site is built by Glu-91, Asp-110, Leu-112, and Asp-113. Substrate-binding positions include 113-116 (DGSS) and Asn-200. Mg(2+) is bound at residue Glu-272.

This sequence belongs to the FBPase class 1 family. As to quaternary structure, homotetramer. The cofactor is Mg(2+).

It localises to the cytoplasm. It carries out the reaction beta-D-fructose 1,6-bisphosphate + H2O = beta-D-fructose 6-phosphate + phosphate. It participates in carbohydrate biosynthesis; Calvin cycle. The chain is Fructose-1,6-bisphosphatase class 1 from Rhodopseudomonas palustris (strain BisA53).